Here is a 90-residue protein sequence, read N- to C-terminus: MEYSYPLNPDWTTEEMTIVVQFLEAIERAYEKGIDTVELKDKYKEFKQVVPAKGEEKRIGIDFEKASGYSAYKVMQLVKNATTSKIKMQP.

Belongs to the UPF0223 family.

This Listeria welshimeri serovar 6b (strain ATCC 35897 / DSM 20650 / CCUG 15529 / CIP 8149 / NCTC 11857 / SLCC 5334 / V8) protein is UPF0223 protein lwe1035.